The primary structure comprises 81 residues: MNDVFSTAQHKLDALGLRCPEPVMMVRKTVRQMAQGETLLIIADDPATTRDIPSFCEFMDHTLVASETSQTPYQYLIKKGL.

Residue C19 is the Cysteine persulfide intermediate of the active site.

This sequence belongs to the sulfur carrier protein TusA family.

Its subcellular location is the cytoplasm. Its function is as follows. Sulfur carrier protein which probably makes part of a sulfur-relay system. This chain is Sulfur carrier protein TusA, found in Shewanella sp. (strain ANA-3).